A 292-amino-acid polypeptide reads, in one-letter code: Succinate dehydrogenase assembly factor 2, mitochondrial (292 aa).

2 disordered regions span residues 27–68 (RSFG…NTTS) and 266–292 (TGFH…VFDS). The span at 55 to 68 (TNRPPNQHVPNTTS) shows a compositional bias: polar residues.

Belongs to the SDHAF2 family. As to quaternary structure, interacts with the flavoprotein subunit within the SDH catalytic dimer.

The protein localises to the mitochondrion matrix. Functionally, plays an essential role in the assembly of succinate dehydrogenase (SDH), an enzyme complex (also referred to as respiratory complex II) that is a component of both the tricarboxylic acid (TCA) cycle and the mitochondrial electron transport chain, and which couples the oxidation of succinate to fumarate with the reduction of ubiquinone (coenzyme Q) to ubiquinol. Required for flavinylation (covalent attachment of FAD) of the flavoprotein subunit of the SDH catalytic dimer. The sequence is that of Succinate dehydrogenase assembly factor 2, mitochondrial from Aspergillus flavus (strain ATCC 200026 / FGSC A1120 / IAM 13836 / NRRL 3357 / JCM 12722 / SRRC 167).